A 233-amino-acid chain; its full sequence is Type II methyltransferase M.MunI (233 aa).

The protein belongs to the MT-A70-like family.

The catalysed reaction is a 2'-deoxyadenosine in DNA + S-adenosyl-L-methionine = an N(6)-methyl-2'-deoxyadenosine in DNA + S-adenosyl-L-homocysteine + H(+). In terms of biological role, a methylase that recognizes the double-stranded sequence 5'-CAATTG-3', methylates A-3 on both strands, and protects the DNA from cleavage by the MunI endonuclease. This is Type II methyltransferase M.MunI from Mycoplasma sp.